The primary structure comprises 1291 residues: 1-phosphatidylinositol 4,5-bisphosphate phosphodiesterase gamma-1 (1291 aa).

Ala2 carries the N-acetylalanine modification. Residues 27 to 142 (RSLEVGTVMT…WIRGLTWLME (116 aa)) enclose the PH 1 domain. Positions 152–187 (QIERWLRKQFYSVDRNREDRISAKDLKNMLSQVNYR) constitute an EF-hand domain. The Ca(2+) site is built by Asp165, Asn167, Glu169, Arg171, and Asp176. The PI-PLC X-box domain maps to 320 to 464 (DTMNNPLSHY…LKRKILIKHK (145 aa)). Active-site residues include His335 and His380. A PH 2; first part domain is found at 489–523 (SIKNGILYLEDPVNHEWYPHYFVLTSSKIYYSEET). The residue at position 506 (Tyr506) is a Phosphotyrosine. A disordered region spans residues 522 to 544 (ETSSDQGNEDEEEPKEASGSTEL). SH2 domains are found at residues 550–657 (WFHG…SEPV) and 668–756 (WYHA…RYPI). A Phosphotyrosine; by SYK modification is found at Tyr771. A phosphotyrosine mark is found at Tyr775 and Tyr783. Tyr783 is modified (phosphotyrosine; by ITK, SYK and TXK). An SH3 domain is found at 791–851 (TFKCAVKALF…PSNYVEEMVS (61 aa)). The 37-residue stretch at 895-931 (FVFSISMASVAHWSLDVAADSQEELQDWVKKIREVAQ) folds into the PH 2; second part domain. The PI-PLC Y-box domain maps to 953–1070 (LSELVVYCRP…GYVLQPSVMR (118 aa)). Tyr977 carries the phosphotyrosine modification. The C2 domain occupies 1071–1194 (DEAFDPFDKS…TGYRAVPLKN (124 aa)). Phosphoserine occurs at positions 1222, 1228, and 1249. Tyr1254 carries the post-translational modification Phosphotyrosine. Residue Ser1264 is modified to Phosphoserine. The tract at residues 1271–1291 (HFDGRDRRTPRRTRVNGDNRL) is disordered.

As to quaternary structure, interacts with AGAP2 via its SH3 domain. Interacts (via SH2 domain) with RET. Interacts with FLT1 (tyrosine-phosphorylated). Interacts (via SH2 domain) with FGFR1, FGFR2, FGFR3 and FGFR4 (phosphorylated). Interacts with LAT (phosphorylated) upon TCR activation. Interacts (via SH3 domain) with the Pro-rich domain of TNK1. Associates with BLNK, VAV1, GRB2 and NCK1 in a B-cell antigen receptor-dependent fashion. Interacts with CBLB in activated T-cells; which inhibits phosphorylation. Interacts with SHB. Interacts (via SH3 domain) with the Arg/Gly-rich-flanked Pro-rich domains of KHDRBS1/SAM68. This interaction is selectively regulated by arginine methylation of KHDRBS1/SAM68. Interacts with INPP5D/SHIP1, THEMIS and CLNK. Interacts with AXL, FLT4 and KIT. Interacts with RALGPS1. Interacts (via the SH2 domains) with VIL1 (phosphorylated at C-terminus tyrosine phosphorylation sites). Interacts (via SH2 domain) with PDGFRA and PDGFRB (tyrosine phosphorylated). Interacts with PIP5K1C. Interacts with NTRK1 and NTRK2 (phosphorylated upon ligand-binding). Interacts with SYK; activates PLCG1. Interacts with GRB2, LAT and THEMIS upon TCR activation in thymocytes. Interacts with TESPA1; the association is increased with prolonged stimulation of the TCR and may facilitate the assembly of the LAT signalosome. Interacts (via C-terminal proline-rich domain (PRD)) with PLCG1 (via SH3 domain); this interaction leads to guanine nucleotide exchange from PlCG1 to DNM1 and enhances DNM1-dependent endocytosis. It depends on Ca(2+) as a cofactor. Ubiquitinated by CBLB in activated T-cells. Post-translationally, tyrosine phosphorylated in response to signaling via activated FLT3, KIT and PDGFRA. Tyrosine phosphorylated by activated FGFR1, FGFR2, FGFR3 and FGFR4. Tyrosine phosphorylated by activated FLT1 and KDR. Tyrosine phosphorylated by activated PDGFRB. The receptor-mediated activation of PLCG1 involves its phosphorylation by tyrosine kinases, in response to ligation of a variety of growth factor receptors and immune system receptors. For instance, SYK phosphorylates and activates PLCG1 in response to ligation of the B-cell receptor. May be dephosphorylated by PTPRJ. Phosphorylated by ITK and TXK on Tyr-783 upon TCR activation in T-cells.

Its subcellular location is the cell projection. It is found in the lamellipodium. The protein localises to the ruffle. It carries out the reaction a 1,2-diacyl-sn-glycero-3-phospho-(1D-myo-inositol-4,5-bisphosphate) + H2O = 1D-myo-inositol 1,4,5-trisphosphate + a 1,2-diacyl-sn-glycerol + H(+). The enzyme catalyses a 1,2-diacyl-sn-glycero-3-phospho-(1D-myo-inositol) + H2O = 1D-myo-inositol 1-phosphate + a 1,2-diacyl-sn-glycerol + H(+). Its activity is regulated as follows. Activated by phosphorylation on tyrosine residues. Its function is as follows. Mediates the production of the second messenger molecules diacylglycerol (DAG) and inositol 1,4,5-trisphosphate (IP3). Plays an important role in the regulation of intracellular signaling cascades. Becomes activated in response to ligand-mediated activation of receptor-type tyrosine kinases, such as PDGFRA, PDGFRB, EGFR, FGFR1, FGFR2, FGFR3 and FGFR4. Plays a role in actin reorganization and cell migration. Guanine nucleotide exchange factor that binds the GTPase DNM1 and catalyzes the dissociation of GDP, allowing a GTP molecule to bind in its place, therefore enhancing DNM1-dependent endocytosis. The protein is 1-phosphatidylinositol 4,5-bisphosphate phosphodiesterase gamma-1 of Bos taurus (Bovine).